The chain runs to 201 residues: Ras-related protein Rab-35 (201 aa).

GTP is bound by residues Gly-18, Val-19, Gly-20, Lys-21, Ser-22, Ser-23, Ser-34, Gly-35, Tyr-37, Thr-39, and Thr-40. Ser-22 contacts Mg(2+). The Switch 1 motif lies at 30–42 (DNTFSGSYITTIG). Residues Thr-40 and Asp-63 each coordinate Mg(2+). The Switch 2 motif lies at 64 to 80 (TAGQERFRTITSTYYRG). Gly-66 contributes to the GTP binding site. Thr-72 carries the phosphothreonine; by LRRK2 modification. Ser-75 carries the O-(2-cholinephosphoryl)serine modification. The residue at position 77 (Tyr-77) is an O-AMP-tyrosine. Residues Asn-120, Lys-121, Asp-123, Ala-151, and Lys-152 each contribute to the GTP site. Residues Cys-200 and Cys-201 are each lipidated (S-geranylgeranyl cysteine).

Belongs to the small GTPase superfamily. Rab family. As to quaternary structure, interacts with DENND1A and DENND1B; in a nucleotide-dependent manner. Interacts with DENND1C; weak interaction which is nucleotide-independent. Interacts (GTP-bound form) with ACAP2, RUSC2, OCRL MICAL1 and MICALL1; the interaction is direct and probably recruits these effectors to membranes. Interacts with EHD1; the interaction is indirect through MICALL1 and probably recruits EHD1 to membranes. Interacts with GDI1, GDI2, CHM and CHML; phosphorylation at Thr-72 by LRRK2 disrupts these interactions. Mg(2+) is required as a cofactor. In terms of processing, phosphorylation at Thr-72 by LRRK2 prevents the association of regulatory proteins including CHM, CHML and GDP dissociation inhibitors GDI1 and GDI2. Post-translationally, AMPylation at Tyr-77 by L.pneumophila DrrA occurs in the switch 2 region and leads to moderate inactivation of the GTPase activity. It appears to prolong the lifetime of the GTP state of RAB1B by restricting access of GTPase effectors to switch 2 and blocking effector-stimulated GTP hydrolysis, thereby rendering RAB35 constitutively active. Phosphocholinated by L.pneumophila AnkX. Both GDP-bound and GTP-bound forms can be phosphocholinated. Phosphocholination inhibits the GEF activity of DENND1A.

The protein localises to the cell membrane. It is found in the membrane. The protein resides in the clathrin-coated pit. Its subcellular location is the cytoplasmic vesicle. It localises to the clathrin-coated vesicle. The protein localises to the endosome. It is found in the melanosome. It carries out the reaction GTP + H2O = GDP + phosphate + H(+). With respect to regulation, regulated by guanine nucleotide exchange factors (GEFs) including DENND1A, DENND1B and DENND1C which promote the exchange of bound GDP for free GTP. Regulated by GTPase activating proteins (GAPs) including TBC1D10 and TBC1D13 which increase GTP hydrolysis activity. Inhibited by GDP dissociation inhibitors (GDIs) which prevent Rab-GDP dissociation. Functionally, the small GTPases Rab are key regulators of intracellular membrane trafficking, from the formation of transport vesicles to their fusion with membranes. Rabs cycle between an inactive GDP-bound form and an active GTP-bound form that is able to recruit to membranes different sets of downstream effectors directly responsible for vesicle formation, movement, tethering and fusion. RAB35 is involved in the process of endocytosis and is an essential rate-limiting regulator of the fast recycling pathway back to the plasma membrane. During cytokinesis, required for the postfurrowing terminal steps, namely for intercellular bridge stability and abscission, possibly by controlling phosphatidylinositol 4,5-bis phosphate (PIP2) and SEPT2 localization at the intercellular bridge. May indirectly regulate neurite outgrowth. Together with TBC1D13 may be involved in regulation of insulin-induced glucose transporter SLC2A4/GLUT4 translocation to the plasma membrane in adipocytes. The protein is Ras-related protein Rab-35 of Homo sapiens (Human).